A 239-amino-acid chain; its full sequence is Ribonuclease PH (239 aa).

Phosphate is bound by residues Arg87 and 125–127 (GTR).

Belongs to the RNase PH family. Homohexameric ring arranged as a trimer of dimers.

It carries out the reaction tRNA(n+1) + phosphate = tRNA(n) + a ribonucleoside 5'-diphosphate. Its function is as follows. Phosphorolytic 3'-5' exoribonuclease that plays an important role in tRNA 3'-end maturation. Removes nucleotide residues following the 3'-CCA terminus of tRNAs; can also add nucleotides to the ends of RNA molecules by using nucleoside diphosphates as substrates, but this may not be physiologically important. Probably plays a role in initiation of 16S rRNA degradation (leading to ribosome degradation) during starvation. In Pseudomonas paraeruginosa (strain DSM 24068 / PA7) (Pseudomonas aeruginosa (strain PA7)), this protein is Ribonuclease PH.